The chain runs to 582 residues: Protein alan shepard (582 aa).

A compositionally biased stretch (pro residues) spans 1 to 12; it reads MHPRYSPAPPPQ. Residues 1-73 form a disordered region; the sequence is MHPRYSPAPP…AAPPTSRSAF (73 aa). Position 5 is a phosphotyrosine (Y5). The segment covering 13-24 has biased composition (low complexity); sequence QQQQMGGPPHQQ. Over residues 25-35 the composition is skewed to gly residues; sequence QGGGGGGGGSM. Residues 37 to 57 show a composition bias toward polar residues; the sequence is GPSNAQQLPPQIPRSQNYSNG. A compositionally biased stretch (low complexity) spans 58–72; it reads SSSSAAAAPPTSRSA. 2 positions are modified to phosphotyrosine: Y125 and Y142. The interval 164–225 is disordered; it reads PATTTYGQRV…TVQNQNQQGG (62 aa). Residues 178 to 225 are compositionally biased toward low complexity; sequence SPSNTNSSSSSNTGSQSGTLSTSLSNTTNTNTNMGPNGTVQNQNQQGG. 2 RRM domains span residues 231-304 and 310-389; these read TNLY…MAKQ and TNLY…FADG. The interval 555 to 582 is disordered; sequence PMTDSEQASTAASPDEAYTQYPHQAAPK.

Has a role in the perception of gravity. In Drosophila erecta (Fruit fly), this protein is Protein alan shepard.